The chain runs to 1237 residues: Clustered mitochondria protein homolog (1237 aa).

The Clu domain maps to 291-535 (DITRSQENCL…RITPLDVAWS (245 aa)). 2 stretches are compositionally biased toward basic and acidic residues: residues 575–597 (RKTA…DKAE) and 845–854 (SQIKSQEHSP). 2 disordered regions span residues 575–614 (RKTA…AVAS) and 845–886 (SQIK…VAAS). TPR repeat units follow at residues 957–990 (AKLY…TERT), 999–1032 (ILSY…WKII), and 1041–1074 (ITTM…CEGL). Disordered regions lie at residues 1152 to 1189 (RLRR…KSIG) and 1201 to 1237 (FIEG…VQTA). Residues 1156–1187 (TNLSPRMTIGTKPQPQVGQNAPATTNGATSKS) are compositionally biased toward polar residues.

It belongs to the CLU family. As to quaternary structure, may associate with the eukaryotic translation initiation factor 3 (eIF-3) complex.

The protein localises to the cytoplasm. Its function is as follows. mRNA-binding protein involved in proper cytoplasmic distribution of mitochondria. This is Clustered mitochondria protein homolog from Ajellomyces capsulatus (strain NAm1 / WU24) (Darling's disease fungus).